A 210-amino-acid polypeptide reads, in one-letter code: N-(5'-phosphoribosyl)anthranilate isomerase (210 aa).

It belongs to the TrpF family.

The catalysed reaction is N-(5-phospho-beta-D-ribosyl)anthranilate = 1-(2-carboxyphenylamino)-1-deoxy-D-ribulose 5-phosphate. It functions in the pathway amino-acid biosynthesis; L-tryptophan biosynthesis; L-tryptophan from chorismate: step 3/5. In Trichormus variabilis (strain ATCC 29413 / PCC 7937) (Anabaena variabilis), this protein is N-(5'-phosphoribosyl)anthranilate isomerase.